A 253-amino-acid chain; its full sequence is MRVADSIMKKSIGLVGDTGRMGVLLTQALLCRPHCFLGKGFSRRSQTSLEEVVTENDILIDFSSPEVTSLLLDFLLKTPRPVIIGTTGFTNDSGVKTKLSALSEYVPVVVCANTSLGAYVQKRLAAFAAKLFSTSYDVRILETHHRAKADAISGTAISLAEAIRSAKAESYEEEPEPFIEMHGSRLGNVCGEHEVSFVGEDERFVIRHEVFSRRVFSGGVLLILEKIMGEGLPKGYYTSDVLYESLFQEKVFG.

Residue Gly-16–Met-21 participates in NAD(+) binding. Arg-44 is a binding site for NADP(+). Residues Gly-85–Thr-87 and Cys-111–Thr-114 each bind NAD(+). Catalysis depends on His-144, which acts as the Proton donor/acceptor. His-145 lines the (S)-2,3,4,5-tetrahydrodipicolinate pocket. Lys-148 serves as the catalytic Proton donor. Gly-154 to Thr-155 contacts (S)-2,3,4,5-tetrahydrodipicolinate.

This sequence belongs to the DapB family.

It is found in the cytoplasm. It catalyses the reaction (S)-2,3,4,5-tetrahydrodipicolinate + NAD(+) + H2O = (2S,4S)-4-hydroxy-2,3,4,5-tetrahydrodipicolinate + NADH + H(+). The enzyme catalyses (S)-2,3,4,5-tetrahydrodipicolinate + NADP(+) + H2O = (2S,4S)-4-hydroxy-2,3,4,5-tetrahydrodipicolinate + NADPH + H(+). The protein operates within amino-acid biosynthesis; L-lysine biosynthesis via DAP pathway; (S)-tetrahydrodipicolinate from L-aspartate: step 4/4. In terms of biological role, catalyzes the conversion of 4-hydroxy-tetrahydrodipicolinate (HTPA) to tetrahydrodipicolinate. This Chlamydia trachomatis serovar A (strain ATCC VR-571B / DSM 19440 / HAR-13) protein is 4-hydroxy-tetrahydrodipicolinate reductase.